We begin with the raw amino-acid sequence, 141 residues long: Large ribosomal subunit protein uL11B/uL11C (141 aa).

It belongs to the universal ribosomal protein uL11 family. As to quaternary structure, part of the ribosomal stalk of the 50S ribosomal subunit. Interacts with L10 and the large rRNA to form the base of the stalk. L10 forms an elongated spine to which L12 dimers bind in a sequential fashion forming a multimeric L10(L12)X complex. One or more lysine residues are methylated.

In terms of biological role, forms part of the ribosomal stalk which helps the ribosome interact with GTP-bound translation factors. The polypeptide is Large ribosomal subunit protein uL11B/uL11C (Bacillus cereus (strain ATCC 14579 / DSM 31 / CCUG 7414 / JCM 2152 / NBRC 15305 / NCIMB 9373 / NCTC 2599 / NRRL B-3711)).